The chain runs to 200 residues: WUSCHEL-related homeobox 9 (200 aa).

The homeobox; WUS-type DNA-binding region spans 10-74 (VKCGRWNPTA…NHKARERHHH (65 aa)). Basic residues predominate over residues 70-80 (ERHHHKKRRRG). Positions 70–118 (ERHHHKKRRRGASSPDSGSNDDDGRAAAHEGDADLVLQPPESKREARSY) are disordered. Basic and acidic residues predominate over residues 91–101 (DDGRAAAHEGD).

It belongs to the WUS homeobox family. In terms of tissue distribution, specifically expressed in the central cells of the quiescent center (QC) of the root.

It is found in the nucleus. Functionally, transcription factor which may be involved in the specification and maintenance of the stem cells (QC cells) in the root apical meristem (RAM). This is WUSCHEL-related homeobox 9 (WOX9) from Oryza sativa subsp. japonica (Rice).